The primary structure comprises 217 residues: Small ribosomal subunit protein uS3 (217 aa).

Residues 38–106 (IRKFVQKELA…QVHINIIEIK (69 aa)) enclose the KH type-2 domain.

The protein belongs to the universal ribosomal protein uS3 family. Part of the 30S ribosomal subunit. Forms a tight complex with proteins S10 and S14.

Functionally, binds the lower part of the 30S subunit head. Binds mRNA in the 70S ribosome, positioning it for translation. The polypeptide is Small ribosomal subunit protein uS3 (Streptococcus sanguinis (strain SK36)).